Here is a 308-residue protein sequence, read N- to C-terminus: Ribonuclease HIII (308 aa).

In terms of domain architecture, RNase H type-2 spans 91–308 (KNVIGSDEVG…TEKALKMVKK (218 aa)). A divalent metal cation is bound by residues Asp97, Glu98, and Asp202.

This sequence belongs to the RNase HII family. RnhC subfamily. Mn(2+) is required as a cofactor. The cofactor is Mg(2+).

Its subcellular location is the cytoplasm. It catalyses the reaction Endonucleolytic cleavage to 5'-phosphomonoester.. Endonuclease that specifically degrades the RNA of RNA-DNA hybrids. This is Ribonuclease HIII from Listeria monocytogenes serotype 4b (strain F2365).